A 927-amino-acid chain; its full sequence is MPVRKQDTQRALHLLEEYRSKLSQTEDRQLRSSIERVINIFQSNLFQALIDIQEFYEVTLLDNPKCIDRSKQSEPIQPVNTWEISSLPSTTVTSETLPSSLSPSVEKYRYQDEDTPPQEHISPQITNEVIGPELVHVSEKNLSEIENVHGFVSHSHISPIKPTEAVPPSSPTVPVIPVLPVPAENTVILPTIPQANPPPVLVNTDSLETSTYVNGTDADYEYEEITLERGNSGLGFSIAGGTDNPHIGDDSSIFITKIIAGGAAAQDGRLRVNDCILRVNEVDVRDVTHSKAVEALKEAGSIVRLYVKRRKPVSEKIMEIKLIKGPKGLGFSIAGGVGNQHIPGDNSIYVTKIIEGGAAHKDGKLQIGDKLLAVNSVCLEEVTHEEAVTALKNTSDFVYLKVAKPTSMYMNDGYAPPDITNSSSQPVDNHVSPSSYLGHTPASPARYSPVSKAMLGDDEITREPRKVVLHRGSTGLGFNIVGGEDGEGIFISFILAGGPADLSGELRKGDRIISVNSVDLRTASHEQAAAALKNAGQAVTIVAQYRPEEYSRFEAKIHDLREQMMNSSISSGSGSLRTSQKRSLYVRALFDYDKTKDSGLPSQGLNFKFGDILHVINASDDEWWQARQVTPDGESDEVGVIPSKRRVEKKERARLKTVKFNSKTRGDKGQSFNDKRKKNLFSRKFPFYKNKDQSEQETSDADQHITSNASDSESSYRGQEEYVLSYEPVNQQEVNYTRPVIILGPMKDRINDDLISEFPDKFGSCVPHTTRPKRDYEVDGRDYHFVTSREQMEKDIQEHKFIEAGQYNNHLYGTSVQSVREVAEKGKHCILDVSGNAIKRLQIAQLYPISIFIKPKSMENIMEMNKRLTEEQARKTFERAMKLEQEFTEHFTAIVQGDTLEDIYNQVKQIIEEQSGPYIWVPAKEKL.

Positions R4 to P64 constitute an L27 domain. The residue at position 115 (T115) is a Phosphothreonine. Phosphoserine is present on residues S122, S138, and S158. The interval P162–Y212 is interaction with SH3 domains. The segment at E224–R546 is required for interaction with MARCHF2. 3 consecutive PDZ domains span residues G230–I317, G325–D412, and T474–A555. The residue at position 232 (S232) is a Phosphoserine. Y399 is modified (phosphotyrosine). 9 positions are modified to phosphoserine: S568, S573, S575, S579, S598, S619, S707, S710, and S857. Residues K581–E651 enclose the SH3 domain. Residues R683–M858 enclose the Guanylate kinase-like domain. The disordered stretch occupies residues K691–Q719. Positions H704–R717 are enriched in polar residues.

The protein belongs to the MAGUK family. Homotetramer. Interacts (via guanylate kinase-like domain) with DLGAP1, DLGAP2, DLGAP3, DLGAP4 and MAP1A. Interacts (via guanylate kinase-like domain) with KIF13B. May interact with HTR2A. Interacts (via PDZ domains) with GRIA1. Interacts (via PDZ domains) with GRIN2A. Interacts (via PDZ domains) with KCND2 and KCND3. Interacts (via PDZ domains) with KCNA1, KCNA2, KCNA3 and KCNA4. Interacts (via PDZ domains) with ADGRA3. Interacts with KCNF1. Interacts with CAMK2. Interacts with cytoskeleton-associated protein EPB41. Interacts with cytoskeleton-associated protein EZR. Found in a complex with KCNA5 and CAV3. Found in a complex with APC and CTNNB1. Interacts (via PDZ domains) with APC. Interacts with CDH1 through binding to PIK3R1. Forms multiprotein complexes with CASK, LIN7A, LIN7B, LIN7C, APBA1, and KCNJ12. Interacts with TOPK. Forms a tripartite complex composed of DLG1, MPP7 and LIN7 (LIN7A or LIN7C). May interact with TJAP1. Interacts with PTEN. Interacts with FRMPD4 (via C-terminus). Interacts with LRFN1, LRFN2 and LRFN4. Interacts with SFPQ. Interacts (via PDZ domains) with ADGRA2 (via PDZ-binding motif). Interacts with ADAM10; this interaction recruits ADAM10 to the cell membrane during long-term depression in hippocampal neurons. Interacts with DGKI (via PDZ-binding motif). Interacts (via PDZ domains) with MARCHF2 (via PDZ domain); the interaction leads to DLG1 ubiqtuitination and degradation. Interacts (via N-terminus) with MPP3; this interaction connects CADM1 with DLG1 and links CADM1 with the regulatory subunit of phosphoinositide-3-kinase (PI3K) by forming a multiprotein complex and participates in cell spreading. Phosphorylated by MAPK12. Phosphorylation of Ser-232 regulates association with GRIN2A. In terms of processing, ubiquitinated; by MARCHF2 which results in its degradation.

The protein resides in the cell membrane. Its subcellular location is the basolateral cell membrane. The protein localises to the endoplasmic reticulum membrane. It localises to the postsynaptic density. It is found in the synapse. The protein resides in the sarcolemma. Its subcellular location is the apical cell membrane. The protein localises to the cell junction. It localises to the cytoplasm. Functionally, essential multidomain scaffolding protein required for normal development. Recruits channels, receptors and signaling molecules to discrete plasma membrane domains in polarized cells. Promotes epithelial cell layer barrier function via maintaining cell-cell adhesion. May also play a role in adherens junction assembly, signal transduction, cell proliferation, synaptogenesis and lymphocyte activation. Regulates the excitability of cardiac myocytes by modulating the functional expression of Kv4 channels. Functional regulator of Kv1.5 channel. During long-term depression in hippocampal neurons, it recruits ADAM10 to the plasma membrane. In Canis lupus familiaris (Dog), this protein is Disks large homolog 1 (DLG1).